Consider the following 496-residue polypeptide: L-arabinose isomerase (496 aa).

4 residues coordinate Mn(2+): Glu-302, Glu-329, His-346, and His-445.

This sequence belongs to the arabinose isomerase family. The cofactor is Mn(2+).

The catalysed reaction is beta-L-arabinopyranose = L-ribulose. The protein operates within carbohydrate degradation; L-arabinose degradation via L-ribulose; D-xylulose 5-phosphate from L-arabinose (bacterial route): step 1/3. Its function is as follows. Catalyzes the conversion of L-arabinose to L-ribulose. This is L-arabinose isomerase from Thermotoga neapolitana (strain ATCC 49049 / DSM 4359 / NBRC 107923 / NS-E).